We begin with the raw amino-acid sequence, 106 residues long: Thiosulfate sulfurtransferase GlpE (106 aa).

The region spanning 17 to 105 (EQSEAKLVDI…WQRAELPIVR (89 aa)) is the Rhodanese domain. Residue Cys65 is the Cysteine persulfide intermediate of the active site.

Belongs to the GlpE family.

It localises to the cytoplasm. It carries out the reaction thiosulfate + hydrogen cyanide = thiocyanate + sulfite + 2 H(+). The catalysed reaction is thiosulfate + [thioredoxin]-dithiol = [thioredoxin]-disulfide + hydrogen sulfide + sulfite + 2 H(+). Functionally, transferase that catalyzes the transfer of sulfur from thiosulfate to thiophilic acceptors such as cyanide or dithiols. May function in a CysM-independent thiosulfate assimilation pathway by catalyzing the conversion of thiosulfate to sulfite, which can then be used for L-cysteine biosynthesis. This is Thiosulfate sulfurtransferase GlpE from Vibrio campbellii (strain ATCC BAA-1116).